The chain runs to 88 residues: Small ribosomal subunit protein uS17 (88 aa).

It belongs to the universal ribosomal protein uS17 family. As to quaternary structure, part of the 30S ribosomal subunit.

Its function is as follows. One of the primary rRNA binding proteins, it binds specifically to the 5'-end of 16S ribosomal RNA. In Levilactobacillus brevis (strain ATCC 367 / BCRC 12310 / CIP 105137 / JCM 1170 / LMG 11437 / NCIMB 947 / NCTC 947) (Lactobacillus brevis), this protein is Small ribosomal subunit protein uS17.